Reading from the N-terminus, the 123-residue chain is Small ribosomal subunit protein uS12 (123 aa).

The segment at 1–21 (MPTIEQLVRKGRQAKPKKSKT) is disordered. Over residues 9–20 (RKGRQAKPKKSK) the composition is skewed to basic residues. 3-methylthioaspartic acid is present on Asp89.

This sequence belongs to the universal ribosomal protein uS12 family. As to quaternary structure, part of the 30S ribosomal subunit. Contacts proteins S8 and S17. May interact with IF1 in the 30S initiation complex.

Functionally, with S4 and S5 plays an important role in translational accuracy. Interacts with and stabilizes bases of the 16S rRNA that are involved in tRNA selection in the A site and with the mRNA backbone. Located at the interface of the 30S and 50S subunits, it traverses the body of the 30S subunit contacting proteins on the other side and probably holding the rRNA structure together. The combined cluster of proteins S8, S12 and S17 appears to hold together the shoulder and platform of the 30S subunit. The polypeptide is Small ribosomal subunit protein uS12 (Bifidobacterium adolescentis (strain ATCC 15703 / DSM 20083 / NCTC 11814 / E194a)).